Consider the following 307-residue polypeptide: Zygote arrest protein 2.L (307 aa).

The segment at leucine 138–lysine 200 is disordered. Positions leucine 156–proline 186 are enriched in basic and acidic residues. The segment at glutamine 208–lysine 293 adopts a 3CxxC-type zinc-finger fold.

Belongs to the ZAR1 family. Expressed in oocytes.

The protein resides in the cytoplasm. Its subcellular location is the cytoplasmic ribonucleoprotein granule. MRNA-binding protein required for maternal mRNA storage, translation and degradation during oocyte maturation. Probably promotes formation of some phase-separated membraneless compartment that stores maternal mRNAs in oocytes: acts by undergoing liquid-liquid phase separation upon binding to maternal mRNAs. Binds to the 3'-UTR of maternal mRNAs, inhibiting their translation. This Xenopus laevis (African clawed frog) protein is Zygote arrest protein 2.L (zar2.L).